A 281-amino-acid chain; its full sequence is MFDLIKAIIIGIIEGLTEFLPVSSTGHIILAEALMKIPSGNVWTKAFSSVFDYSIQLGAIFAVIQLYFDKLNPFSSKKTDHEKFQTWRLWIRVIVGVLPAIVFGFALNDFMDAHLMNFWVVSATLIIYGIAFIVIENRQKSIVPVITNVNQITFKLALYIGLFQVLSIVPGTSRSGATILGAIILGASRFVAAEFSFFLSIPVMFGVTFLKMGSFFRDGGSFTGMQSIVMLVGFIVSWIVAWFAIKFMMNYIKNNDFKVFGYYRIIIGAIFLVFGILGIVG.

Helical transmembrane passes span 2 to 22, 46 to 66, 93 to 113, 115 to 135, 152 to 172, 190 to 210, 228 to 248, and 259 to 279; these read FDLI…FLPV, AFSS…VIQL, VIVG…FMDA, LMNF…FIVI, ITFK…VPGT, FVAA…VTFL, IVML…IKFM, and VFGY…ILGI.

It belongs to the UppP family.

It is found in the cell membrane. The catalysed reaction is di-trans,octa-cis-undecaprenyl diphosphate + H2O = di-trans,octa-cis-undecaprenyl phosphate + phosphate + H(+). In terms of biological role, catalyzes the dephosphorylation of undecaprenyl diphosphate (UPP). Confers resistance to bacitracin. In Leuconostoc mesenteroides subsp. mesenteroides (strain ATCC 8293 / DSM 20343 / BCRC 11652 / CCM 1803 / JCM 6124 / NCDO 523 / NBRC 100496 / NCIMB 8023 / NCTC 12954 / NRRL B-1118 / 37Y), this protein is Undecaprenyl-diphosphatase.